The sequence spans 528 residues: NAC domain-containing protein 13 (528 aa).

In terms of domain architecture, NAC spans 10 to 160; it reads LAPGFRFHPT…AYVLYKIYKK (151 aa). A DNA-binding region spans residues 107 to 166; it reads VGEKKTLVFHRGRAPNGERTNWVMHEYTLHKEELKRCGGEDVKDAYVLYKIYKKSGSGPK. The tract at residues 388-419 is disordered; that stretch reads EAPGTGDSSEFLNPVPSGISTTNEDDPSKDES. The helical transmembrane segment at 499-519 threads the bilayer; the sequence is FFCLSIIGALCALFWVIIGTM.

As to quaternary structure, interacts with RCD1. Expressed in roots, rosette leaves, shoot apex, stems and flowers.

It localises to the endoplasmic reticulum membrane. It is found in the nucleus. Its function is as follows. Transcriptional activator activated by proteolytic cleavage through regulated intramembrane proteolysis (RIP). Involved in oxidative stress tolerance by mediating regulation of mitochondrial retrograde signaling during mitochondrial dysfunction. Interacts directly with the mitochondrial dysfunction DNA consensus motif 5'-CTTGNNNNNCA[AC]G-3', a cis-regulatory elements of several mitochondrial retrograde regulation-induced genes, and triggers increased oxidative stress tolerance. The polypeptide is NAC domain-containing protein 13 (Arabidopsis thaliana (Mouse-ear cress)).